Here is a 286-residue protein sequence, read N- to C-terminus: Bifunctional protein FolD (286 aa).

NADP(+) is bound by residues 168–170 (GRG), T195, and V236.

It belongs to the tetrahydrofolate dehydrogenase/cyclohydrolase family. Homodimer.

The enzyme catalyses (6R)-5,10-methylene-5,6,7,8-tetrahydrofolate + NADP(+) = (6R)-5,10-methenyltetrahydrofolate + NADPH. It catalyses the reaction (6R)-5,10-methenyltetrahydrofolate + H2O = (6R)-10-formyltetrahydrofolate + H(+). It functions in the pathway one-carbon metabolism; tetrahydrofolate interconversion. Its function is as follows. Catalyzes the oxidation of 5,10-methylenetetrahydrofolate to 5,10-methenyltetrahydrofolate and then the hydrolysis of 5,10-methenyltetrahydrofolate to 10-formyltetrahydrofolate. This is Bifunctional protein FolD from Mycolicibacterium gilvum (strain PYR-GCK) (Mycobacterium gilvum (strain PYR-GCK)).